A 349-amino-acid polypeptide reads, in one-letter code: N-acetyl-gamma-glutamyl-phosphate reductase (349 aa).

Residue cysteine 149 is part of the active site.

This sequence belongs to the NAGSA dehydrogenase family. Type 1 subfamily.

It is found in the cytoplasm. The catalysed reaction is N-acetyl-L-glutamate 5-semialdehyde + phosphate + NADP(+) = N-acetyl-L-glutamyl 5-phosphate + NADPH + H(+). Its pathway is amino-acid biosynthesis; L-arginine biosynthesis; N(2)-acetyl-L-ornithine from L-glutamate: step 3/4. Its function is as follows. Catalyzes the NADPH-dependent reduction of N-acetyl-5-glutamyl phosphate to yield N-acetyl-L-glutamate 5-semialdehyde. This chain is N-acetyl-gamma-glutamyl-phosphate reductase, found in Acinetobacter baumannii (strain ACICU).